Consider the following 216-residue polypeptide: uncharacterized protein (216 aa).

Belongs to the channel forming colicin family.

This is an uncharacterized protein from Escherichia coli.